The primary structure comprises 112 residues: MTALTQMKCEACQADAPKVTDAELAELIRMVPDWGVQVRDGIMQLERVYKFKNFKLAMAFTNKLADLAEEEFHHPGILTEWGKVTVTWWSHSIKGLHKNDFIMAAKTDQLLD.

It belongs to the pterin-4-alpha-carbinolamine dehydratase family.

The catalysed reaction is (4aS,6R)-4a-hydroxy-L-erythro-5,6,7,8-tetrahydrobiopterin = (6R)-L-erythro-6,7-dihydrobiopterin + H2O. The polypeptide is Putative pterin-4-alpha-carbinolamine dehydratase (Shewanella sp. (strain ANA-3)).